The chain runs to 131 residues: MKMIAWMQHFLETDETKLIYWLTFLMVCMVVDTVLGVLFAKLNPNIKFSSFKIKTGVLIKVSEMILALLAIPFAVPFPAGLPLLYTVYTALCVSEIYSIFGHLRLVDDKSDFLEILENFFKRTSGKNKEEK.

Residues 1-14 (MKMIAWMQHFLETD) are Periplasmic-facing. 2 consecutive stretches face the cytoplasmic side: residues 1–52 (MKMI…SSFK) and 38–49 (LFAKLNPNIKFS). A helical transmembrane segment spans residues 15–37 (ETKLIYWLTFLMVCMVVDTVLGV). Residues 53 to 75 (IKTGVLIKVSEMILALLAIPFAV) traverse the membrane as a helical segment. The Periplasmic portion of the chain corresponds to 76 to 78 (PFP). The chain crosses the membrane as a helical span at residues 79-101 (AGLPLLYTVYTALCVSEIYSIFG). Residues 102 to 131 (HLRLVDDKSDFLEILENFFKRTSGKNKEEK) lie on the Cytoplasmic side of the membrane.

It belongs to the bacteriophage holin family. phi29likevirus holin subfamily. As to quaternary structure, homomultimer. Interacts with isoform Antiholin; this interaction blocks the holin homomultimerization and delays host cell lysis.

Its subcellular location is the host cell inner membrane. Accumulates harmlessly in the cytoplasmic membrane until it reaches a critical concentration that triggers the formation of micron-scale pores (holes) causing host cell membrane disruption and endolysin escape into the periplasmic space. Determines the precise timing of host cell lysis. Participates with the endolysin and spanin proteins in the sequential events which lead to the programmed host cell lysis releasing the mature viral particles from the host cell. Its function is as follows. Counteracts the aggregation of the holin molecules and thus of pore formation. The polypeptide is Antiholin (14) (Bacillus subtilis (Bacteriophage phi-29)).